The chain runs to 210 residues: Thymidylate kinase (210 aa).

Gly10 to Ser17 lines the ATP pocket.

It belongs to the thymidylate kinase family.

The catalysed reaction is dTMP + ATP = dTDP + ADP. In terms of biological role, phosphorylation of dTMP to form dTDP in both de novo and salvage pathways of dTTP synthesis. This chain is Thymidylate kinase, found in Pseudomonas fluorescens (strain Pf0-1).